Reading from the N-terminus, the 274-residue chain is Kit ligand (274 aa).

Positions 1-25 (MKKTQTWIITCIYLQLLLFNPLVHS) are cleaved as a signal peptide. At glutamine 26 the chain carries Pyrrolidone carboxylic acid. Over 26 to 215 (QGICRNRVTD…SNSIEDSSLQ (190 aa)) the chain is Extracellular. 2 cysteine pairs are disulfide-bonded: cysteine 29–cysteine 114 and cysteine 68–cysteine 164. N-linked (GlcNAc...) asparagine glycosylation is found at asparagine 90, asparagine 97, asparagine 145, and asparagine 196. A helical transmembrane segment spans residues 216–238 (WAAVALPAFFSLVIGFAFGALYW). Residues 239-274 (KKKQPNLTRTVENRQINEEDNEISMLQEKEREFQEV) lie on the Cytoplasmic side of the membrane.

It belongs to the SCF family. In terms of assembly, homodimer, non-covalently linked. Post-translationally, a soluble form is produced by proteolytic processing of the extracellular domain.

Its subcellular location is the cytoplasm. It localises to the cytoskeleton. The protein resides in the cell membrane. The protein localises to the cell projection. It is found in the lamellipodium. Its subcellular location is the filopodium. It localises to the secreted. Stimulates the proliferation of mast cells. Able to augment the proliferation of both myeloid and lymphoid hematopoietic progenitors in bone marrow culture. Also mediates cell-cell adhesion. Acts synergistically with other cytokines, probably interleukins. The sequence is that of Kit ligand (KITLG) from Capra hircus (Goat).